The primary structure comprises 332 residues: Ribosomal RNA small subunit methyltransferase H (332 aa).

S-adenosyl-L-methionine contacts are provided by residues 36 to 38 (GGY), aspartate 54, phenylalanine 81, aspartate 102, and glutamine 109. Positions 297 to 318 (ARSAKLRGAERTEAPAHAAGDL) are disordered.

The protein belongs to the methyltransferase superfamily. RsmH family.

The protein localises to the cytoplasm. It carries out the reaction cytidine(1402) in 16S rRNA + S-adenosyl-L-methionine = N(4)-methylcytidine(1402) in 16S rRNA + S-adenosyl-L-homocysteine + H(+). In terms of biological role, specifically methylates the N4 position of cytidine in position 1402 (C1402) of 16S rRNA. The protein is Ribosomal RNA small subunit methyltransferase H of Rhodopseudomonas palustris (strain TIE-1).